Consider the following 479-residue polypeptide: MGLLNYSNKVCLAPMVRIGELPMRLLALRYGANLVWGPEIVDKALLSGTPVERVVNDRINCIDFVKPPSNKVLFRVHPLEANRLIFQLGSASPELAVEAAKLVANDVAGIDLNCGCPKHFSVHAGMGAGLLKNQDRLVSILDALVNEIGKPYKISISCKIRLLETKEDTLKLVERICDTGVRAITVHCRTTPMRNTEPADRSYLSEIVGVCRNKDVSILVNGDVLSYNDGLDVIEKYGVDGVLIARAAERNVSCFRIEGPLSSFKVAEEFLKMALEVDNNFGNTKYCLNQIMQGSFRKNVRQLAQTAKTYEDLKKAFEIEYKHSDASSVCPTLEKEKSLVISFVDLPSFLESLLASNILKQLSRLHFTKIFAVSEEEDICKQLDDIHEKFLCHGIALSLISADNLASAIASAHLVICMEKDESIMNEAVCDQKITIRLPINSNTNEAVVECENKSMQSKHALDIIQERIKDLEEKAQVV.

Residues 14–16 and Gln87 each bind FMN; that span reads PMV. Cys116 functions as the Proton donor in the catalytic mechanism. FMN contacts are provided by residues Lys159, His187, 221–223, and 245–246; these read NGD and AR.

This sequence belongs to the Dus family. Dus2 subfamily. FMN serves as cofactor.

Its subcellular location is the cytoplasm. The protein resides in the nucleus. It carries out the reaction 5,6-dihydrouridine(20) in tRNA + NADP(+) = uridine(20) in tRNA + NADPH + H(+). The enzyme catalyses 5,6-dihydrouridine(20) in tRNA + NAD(+) = uridine(20) in tRNA + NADH + H(+). The catalysed reaction is a 5,6-dihydrouridine in mRNA + NAD(+) = a uridine in mRNA + NADH + H(+). It catalyses the reaction a 5,6-dihydrouridine in mRNA + NADP(+) = a uridine in mRNA + NADPH + H(+). In terms of biological role, catalyzes the NADPH-dependent synthesis of dihydrouridine, a modified base found in the D-loop of most tRNAs. Specifically modifies U20 in cytoplasmic tRNAs. Also able to mediate dihydrouridylation of some mRNAs, thereby affecting their translation. This is tRNA-dihydrouridine(20) synthase [NAD(P)+] from Schizosaccharomyces pombe (strain 972 / ATCC 24843) (Fission yeast).